The chain runs to 346 residues: Transcription termination factor 4, mitochondrial (346 aa).

Residues Met-1–Lys-42 constitute a mitochondrion transit peptide. 5 MTERF repeats span residues Phe-142 to Gly-172, Lys-177 to Lys-204, Ala-209 to Phe-239, His-245 to Arg-270, and Leu-290 to Lys-318. A dimerization with NSUN4 region spans residues Val-310–Glu-327. Residues Asp-321–Leu-346 form a disordered region. The span at Gln-322–Leu-346 shows a compositional bias: acidic residues.

Belongs to the mTERF family. In terms of assembly, heterodimer with NSUN4; this interaction may be required for NSUN4 recruitment to the mitochondrial large ribosomal subunit. As to expression, widely expressed, with highest levels in liver, followed by testis, kidney and brain.

The protein localises to the mitochondrion. Regulator of mitochondrial ribosome biogenesis and translation. Binds to mitochondrial ribosomal RNAs 16S, 12S and 7S. Targets NSUN4 RNA methyltransferase to the mitochondrial large ribosomal subunit. This Mus musculus (Mouse) protein is Transcription termination factor 4, mitochondrial (Mterf4).